The primary structure comprises 344 residues: Heat-inducible transcription repressor HrcA (344 aa).

Belongs to the HrcA family.

Its function is as follows. Negative regulator of class I heat shock genes (grpE-dnaK-dnaJ and groELS operons). Prevents heat-shock induction of these operons. The polypeptide is Heat-inducible transcription repressor HrcA (Streptococcus pyogenes serotype M1).